A 972-amino-acid polypeptide reads, in one-letter code: Isoleucine--tRNA ligase (972 aa).

The short motif at 63–73 is the 'HIGH' region element; the sequence is PYANGNIHIGH. Position 603 (E603) interacts with L-isoleucyl-5'-AMP. Residues 644 to 648 carry the 'KMSKS' region motif; the sequence is KMSKS. K647 is an ATP binding site.

It belongs to the class-I aminoacyl-tRNA synthetase family. IleS type 1 subfamily. In terms of assembly, monomer.

The protein localises to the cytoplasm. The enzyme catalyses tRNA(Ile) + L-isoleucine + ATP = L-isoleucyl-tRNA(Ile) + AMP + diphosphate. Catalyzes the attachment of isoleucine to tRNA(Ile). As IleRS can inadvertently accommodate and process structurally similar amino acids such as valine, to avoid such errors it has two additional distinct tRNA(Ile)-dependent editing activities. One activity is designated as 'pretransfer' editing and involves the hydrolysis of activated Val-AMP. The other activity is designated 'posttransfer' editing and involves deacylation of mischarged Val-tRNA(Ile). This Brucella suis biovar 1 (strain 1330) protein is Isoleucine--tRNA ligase.